The sequence spans 286 residues: Putative chaperone BssE (286 aa).

ATP is bound by residues 47–54 and 108–115; these read GKQGCGKS and GCVIHLEE.

It belongs to the CbbQ/NirQ/NorQ/GpvN family.

In terms of biological role, may have a role in assembly and/or activation of benzylsuccinate synthase. This Thauera aromatica protein is Putative chaperone BssE (bssE).